The following is a 159-amino-acid chain: Endoribonuclease YbeY (159 aa).

His119, His123, and His129 together coordinate Zn(2+).

The protein belongs to the endoribonuclease YbeY family. Requires Zn(2+) as cofactor.

The protein resides in the cytoplasm. Its function is as follows. Single strand-specific metallo-endoribonuclease involved in late-stage 70S ribosome quality control and in maturation of the 3' terminus of the 16S rRNA. This is Endoribonuclease YbeY from Acinetobacter baylyi (strain ATCC 33305 / BD413 / ADP1).